A 515-amino-acid polypeptide reads, in one-letter code: Methionine--tRNA ligase (515 aa).

A 'HIGH' region motif is present at residues 13 to 23 (AYPNGKPHIGH). The 'KMSKS' region signature appears at 300-304 (KMSKS). Lys303 is a binding site for ATP.

It belongs to the class-I aminoacyl-tRNA synthetase family. MetG type 2B subfamily. In terms of assembly, monomer.

The protein resides in the cytoplasm. The catalysed reaction is tRNA(Met) + L-methionine + ATP = L-methionyl-tRNA(Met) + AMP + diphosphate. In terms of biological role, is required not only for elongation of protein synthesis but also for the initiation of all mRNA translation through initiator tRNA(fMet) aminoacylation. This Brucella suis biovar 1 (strain 1330) protein is Methionine--tRNA ligase.